A 219-amino-acid chain; its full sequence is Thiopurine S-methyltransferase (219 aa).

The S-adenosyl-L-methionine site is built by Trp10, Leu45, Glu66, and Arg123.

Belongs to the class I-like SAM-binding methyltransferase superfamily. TPMT family.

The protein localises to the cytoplasm. It catalyses the reaction S-adenosyl-L-methionine + a thiopurine = S-adenosyl-L-homocysteine + a thiopurine S-methylether.. This is Thiopurine S-methyltransferase from Bordetella pertussis (strain Tohama I / ATCC BAA-589 / NCTC 13251).